A 133-amino-acid polypeptide reads, in one-letter code: Small ribosomal subunit protein uS8 (133 aa).

This sequence belongs to the universal ribosomal protein uS8 family. In terms of assembly, part of the 30S ribosomal subunit. Contacts proteins S5 and S12.

One of the primary rRNA binding proteins, it binds directly to 16S rRNA central domain where it helps coordinate assembly of the platform of the 30S subunit. The protein is Small ribosomal subunit protein uS8 of Thermosynechococcus vestitus (strain NIES-2133 / IAM M-273 / BP-1).